The chain runs to 846 residues: Homeobox protein 12 (846 aa).

8 stretches are compositionally biased toward low complexity: residues 78 to 94 (IIGSSSNTLSTPSVQAT), 160 to 170 (PLSSSSTVVPA), 237 to 249 (GNHNNNNNNYNYN), 289 to 301 (QPQSQSQSQQLQP), 309 to 321 (LQPQLQSQPQSQQ), 331 to 352 (NNNNNNNNNNNNNNNNNNNNNN), 394 to 443 (NYNQ…SNSN), and 458 to 482 (NNNNNNNKTFQQTSQQQQQQQQQIY). Disordered regions lie at residues 78 to 103 (IIGSSSNTLSTPSVQATPPTPPPSSS), 151 to 177 (IVQPPPPSTPLSSSSTVVPASTPPPSV), 230 to 249 (NGNGNGNGNHNNNNNNYNYN), 286 to 374 (GTKQ…SSSP), 394 to 482 (NYNQ…QQIY), and 515 to 571 (FKQN…NNQF). The span at 524 to 546 (NNDDDDDDDDDEEEEEEEEDDND) shows a compositional bias: acidic residues. Residues 553–604 (SYDEENNNNNNNNNNNNQFKNESIIIGDNYYEIINDRIKSIKQKLHFLEKNS) are a coiled coil. Residues 559–569 (NNNNNNNNNNN) are compositionally biased toward low complexity. A DNA-binding region (homeobox) is located at residues 773–835 (DKKNRRTLND…NKRSREKNQR (63 aa)).

The protein localises to the nucleus. In terms of biological role, putative transcription factor. This is Homeobox protein 12 (hbx12) from Dictyostelium discoideum (Social amoeba).